A 414-amino-acid polypeptide reads, in one-letter code: Gamma-glutamyl phosphate reductase (414 aa).

Belongs to the gamma-glutamyl phosphate reductase family.

The protein resides in the cytoplasm. It catalyses the reaction L-glutamate 5-semialdehyde + phosphate + NADP(+) = L-glutamyl 5-phosphate + NADPH + H(+). The protein operates within amino-acid biosynthesis; L-proline biosynthesis; L-glutamate 5-semialdehyde from L-glutamate: step 2/2. Its function is as follows. Catalyzes the NADPH-dependent reduction of L-glutamate 5-phosphate into L-glutamate 5-semialdehyde and phosphate. The product spontaneously undergoes cyclization to form 1-pyrroline-5-carboxylate. This is Gamma-glutamyl phosphate reductase from Xanthomonas campestris pv. campestris (strain ATCC 33913 / DSM 3586 / NCPPB 528 / LMG 568 / P 25).